Reading from the N-terminus, the 67-residue chain is Small ribosomal subunit protein eS31 (67 aa).

Zn(2+)-binding residues include Cys-31, Cys-34, Cys-49, and Cys-52. The segment at 31 to 52 adopts a C4-type zinc-finger fold; that stretch reads CPKCGAGVFMAEHLNRFACGKC.

The protein belongs to the eukaryotic ribosomal protein eS31 family. As to quaternary structure, part of the 30S ribosomal subunit. It depends on Zn(2+) as a cofactor.

The polypeptide is Small ribosomal subunit protein eS31 (Methanococcus maripaludis (strain C5 / ATCC BAA-1333)).